Here is a 4423-residue protein sequence, read N- to C-terminus: Nonribosomal peptide synthetase 7 (4423 aa).

Residues asparagine 572–isoleucine 986 are condensation 1. The interval glutamate 1007 to arginine 1404 is adenylation 1. Positions leucine 1533 to asparagine 1609 constitute a Carrier 1 domain. O-(pantetheine 4'-phosphoryl)serine is present on serine 1570. Positions glutamate 1657–threonine 2066 are condensation 2. The tract at residues arginine 2102–lysine 2499 is adenylation 2. Residues valine 2642 to glutamine 2718 enclose the Carrier 2 domain. An O-(pantetheine 4'-phosphoryl)serine modification is found at serine 2679. A condensation 3 region spans residues glutamate 2764 to threonine 3170. The segment at arginine 3205 to arginine 3609 is adenylation 3. Positions threonine 3731–threonine 3804 constitute a Carrier 3 domain. Serine 3765 bears the O-(pantetheine 4'-phosphoryl)serine mark. The interval threonine 3875–glycine 4278 is condensation 4. The span at lysine 4288–glutamate 4300 shows a compositional bias: polar residues. The interval lysine 4288–valine 4312 is disordered.

The protein belongs to the NRP synthetase family.

It participates in secondary metabolite biosynthesis. Functionally, nonribosomal peptide synthetase; part of the gene cluster that mediates the biosynthesis of the lipopeptide fusaristatin A. Fusaristatin A consists of a polyketide chain linked to three amino acid residues glutamine (Gln), dehydroalanine (dehydro-Ala), and beta-aminoisobutyric acid. The biosynthesis starts with formation of a linear polyketide chain by the highly reducing polyketide synthase PKS6. The gene cluster does not contain an acyl-CoA ligase or an acyl-transferase, and it is therefore predicted that the polyketide is transferred directly to the nonribosomal peptide synthetase NRPS7. Modules 1-3 from NRPS7 incorporate dehydro-Ala, Gln, and beta-aminoisobutyric acid in the compound, which is released by cyclization. The beta-aminoisobutyric acid units are most likely not freely available to the NRPS, but can be synthesized from thymine, which requires a dehydrogenase, a monooxygenase, and an aminotransferase. The fusaristatin A cluster contains a cytochrome P450 monooxygenase (FGSG_08207) and an aminotransferase (FGSG_17085), which theoretically can perform two of the enzymatic steps. The enzymes may however also be involved in biosynthesis of dehydroalanine or modification of the polyketide. The dehydro-Ala residue can be a result of cyclization, where serine is dehydrated. The last gene of the cluster encodes a protein with an A/B barrel domain found in variable enzymes, which hampers functional prediction. The protein is Nonribosomal peptide synthetase 7 of Gibberella zeae (strain ATCC MYA-4620 / CBS 123657 / FGSC 9075 / NRRL 31084 / PH-1) (Wheat head blight fungus).